Consider the following 76-residue polypeptide: Histone acetyltransferase (76 aa).

Physically interacts with histone H3 in infected macrophages.

The protein localises to the secreted. The protein resides in the host cytoplasm. Its subcellular location is the host nucleus. The enzyme catalyses L-lysyl-[protein] + acetyl-CoA = N(6)-acetyl-L-lysyl-[protein] + CoA + H(+). With respect to regulation, is completely inhibited by anacardic acid, an inhibitor of HAT activity. Histone acetyltransferase, which by binding to the host chromatin, may manipulate the expression of host genes involved in anti-inflammatory responses to evade clearance and to survive in the intracellular milieu. Acetylates histone H3 at the 'Lys-9' and 'Lys-14' positions. The chain is Histone acetyltransferase from Mycobacterium tuberculosis (strain CDC 1551 / Oshkosh).